We begin with the raw amino-acid sequence, 472 residues long: FAD-dependent monooxygenase ltmM (472 aa).

Residues 7–27 (VIIVGGSVAGLSLAHCLEKIG) traverse the membrane as a helical segment. Glu-34, Gly-48, and Arg-107 together coordinate FAD. N-linked (GlcNAc...) asparagine glycosylation is present at Asn-186. Positions 306 and 319 each coordinate FAD. Residues 450–470 (IVYALYLVAAAAFILYCLSSL) traverse the membrane as a helical segment.

This sequence belongs to the paxM FAD-dependent monooxygenase family. It depends on FAD as a cofactor.

Its subcellular location is the membrane. It participates in secondary metabolite biosynthesis. FAD-dependent monooxygenase; part of the gene cluster that mediates the biosynthesis of lolitrems, indole-diterpene mycotoxins that are potent tremorgens in mammals, and are synthesized by clavicipitaceous fungal endophytes in association with their grass hosts. The geranylgeranyl diphosphate (GGPP) synthase ltmG is proposed to catalyze the first step in lolitremB biosynthesis. LtmG catalyzes a series of iterative condensations of isopentenyl diphosphate (IPP) with dimethylallyl diphosphate (DMAPP), geranyl diphosphate (GPP), and farnesyl diphosphate (FPP), to form GGPP. GGPP then condenses with indole-3-glycerol phosphate to form 3-geranylgeranylindole, an acyclic intermediate, to be incorporated into paxilline. Either ltmG or ltmC could be responsible for this step, as both are putative prenyl transferases. The FAD-dependent monooxygenase ltmM then catalyzes the epoxidation of the two terminal alkenes of the geranylgeranyl moiety, which is subsequently cyclized by ltmB, to paspaline. The cytochrome P450 monooxygenases ltmQ and ltmP can sequentially oxidize paspaline to terpendole E and terpendole F. Alternatively, ltmP converts paspaline to an intermediate which is oxidized by ltmQ to terpendole F. LtmF, ltmK, ltmE and ltmJ appear to be unique to the epichloe endophytes. The prenyltransferase ltmF is involved in the 27-hydroxyl-O-prenylation. The cytochrome P450 monooxygenase ltmK is required for the oxidative acetal ring formation. The multi-functional prenyltransferase ltmE is required for C20- and C21-prenylations of the indole ring of paspalanes and acts together with the cytochrome P450 monooxygenase ltmJ to yield lolitremanes by multiple oxidations and ring closures. The stereoisomer pairs of lolitriol and lolitrem N or lolitrem B and lolitrem F may be attributed to variations in the way in which ring closure can occur under the action of ltmJ. While the major product of this pathway is lolitrem B, the prenyl transferases and cytochrome P450 monooxygenases identified in this pathway have a remarkable versatility in their regio- and stereo-specificities to generate a diverse range of metabolites that are products of a metabolic grid rather than a linear pathway. This is FAD-dependent monooxygenase ltmM (ltmM) from Epichloe festucae var. lolii (Neotyphodium lolii).